Reading from the N-terminus, the 436-residue chain is ATP-dependent RNA helicase RhlB (436 aa).

Positions 9 to 37 match the Q motif motif; it reads QKFADFPLHKEVHQALNEAGFEFCTPIQA. The 180-residue stretch at 40–219 folds into the Helicase ATP-binding domain; the sequence is LPILLEKKDI…YDHMNEPEKV (180 aa). Position 53–60 (53–60) interacts with ATP; sequence AQTGTGKT. The short motif at 165 to 168 is the DEAD box element; that stretch reads DEAD. A Helicase C-terminal domain is found at 243 to 390; that stretch reads KMPLLLSLLE…VTSYDSDALL (148 aa). Residues 392–436 form a disordered region; it reads DIPPPVRIHRKPSTHTRNTRDRSSGRPQGGQRNGPRRHDKTRRHS. Residues 425–436 show a composition bias toward basic residues; it reads GPRRHDKTRRHS.

This sequence belongs to the DEAD box helicase family. RhlB subfamily. Component of the RNA degradosome, which is a multiprotein complex involved in RNA processing and mRNA degradation.

Its subcellular location is the cytoplasm. The catalysed reaction is ATP + H2O = ADP + phosphate + H(+). Its function is as follows. DEAD-box RNA helicase involved in RNA degradation. Has RNA-dependent ATPase activity and unwinds double-stranded RNA. This chain is ATP-dependent RNA helicase RhlB, found in Shewanella pealeana (strain ATCC 700345 / ANG-SQ1).